The primary structure comprises 463 residues: uncharacterized protein (463 aa).

The protein belongs to the mycobacterial PPE family.

This is an uncharacterized protein from Mycobacterium tuberculosis (strain CDC 1551 / Oshkosh).